The primary structure comprises 159 residues: 3-hydroxyacyl-[acyl-carrier-protein] dehydratase FabZ (159 aa).

H58 is a catalytic residue.

This sequence belongs to the thioester dehydratase family. FabZ subfamily.

The protein localises to the cytoplasm. It carries out the reaction a (3R)-hydroxyacyl-[ACP] = a (2E)-enoyl-[ACP] + H2O. In terms of biological role, involved in unsaturated fatty acids biosynthesis. Catalyzes the dehydration of short chain beta-hydroxyacyl-ACPs and long chain saturated and unsaturated beta-hydroxyacyl-ACPs. The chain is 3-hydroxyacyl-[acyl-carrier-protein] dehydratase FabZ from Helicobacter pylori (strain Shi470).